A 456-amino-acid chain; its full sequence is Chromosomal replication initiator protein DnaA 1 (456 aa).

The domain I, interacts with DnaA modulators stretch occupies residues 1–68; it reads MRAWEEFLLL…KANLINNNGK (68 aa). Residues 68 to 101 are domain II; the sequence is KPIRVRVTSLDKSTPFKESQIQQEKTAYFTMQYG. A domain III, AAA+ region region spans residues 102–320; sequence DIDPQMSFAN…HALTTLAKRV (219 aa). ATP contacts are provided by Ser-150, Gly-152, Lys-153, and Thr-154. Residues 321 to 456 are domain IV, binds dsDNA; sequence AYKKLSHQLL…AYQSLDLIVD (136 aa).

The protein belongs to the DnaA family. Oligomerizes as a right-handed, spiral filament on DNA at oriC.

It is found in the cytoplasm. In terms of biological role, plays an essential role in the initiation and regulation of chromosomal replication. ATP-DnaA binds to the origin of replication (oriC) to initiate formation of the DNA replication initiation complex once per cell cycle. Binds the DnaA box (a 9 base pair repeat at the origin) and separates the double-stranded (ds)DNA. Forms a right-handed helical filament on oriC DNA; dsDNA binds to the exterior of the filament while single-stranded (ss)DNA is stabiized in the filament's interior. The ATP-DnaA-oriC complex binds and stabilizes one strand of the AT-rich DNA unwinding element (DUE), permitting loading of DNA polymerase. After initiation quickly degrades to an ADP-DnaA complex that is not apt for DNA replication. Binds acidic phospholipids. The sequence is that of Chromosomal replication initiator protein DnaA 1 from Chlamydia muridarum (strain MoPn / Nigg).